The following is a 367-amino-acid chain: Peroxidase 1 (367 aa).

The N-terminal stretch at Met1–Ala33 is a signal peptide. Residue Gln34 is modified to Pyrrolidone carboxylic acid. 4 disulfide bridges follow: Cys44-Cys125, Cys77-Cys82, Cys131-Cys335, and Cys209-Cys244. The active-site Proton acceptor is His75. Residues Asp76, Val79, Gly81, Asp83, and Ser85 each coordinate Ca(2+). N-linked (GlcNAc...) asparagine glycosylation occurs at Asn164. Residue Pro172 coordinates substrate. His202 lines the heme b pocket. Thr203 contributes to the Ca(2+) binding site. N-linked (GlcNAc...) asparagine glycans are attached at residues Asn218 and Asn247. Positions 259, 262, and 267 each coordinate Ca(2+). Asn303 carries an N-linked (GlcNAc...) asparagine glycan.

Belongs to the peroxidase family. Classical plant (class III) peroxidase subfamily. Requires heme b as cofactor. Ca(2+) serves as cofactor. In terms of tissue distribution, expressed in the root tip meristems.

The protein localises to the secreted. Its subcellular location is the vacuole. It carries out the reaction 2 a phenolic donor + H2O2 = 2 a phenolic radical donor + 2 H2O. In terms of biological role, removal of H(2)O(2), oxidation of toxic reductants, biosynthesis and degradation of lignin, suberization, auxin catabolism, response to environmental stresses such as wounding, pathogen attack and oxidative stress. These functions might be dependent on each isozyme/isoform in each plant tissue. The chain is Peroxidase 1 (PER1) from Zea mays (Maize).